We begin with the raw amino-acid sequence, 468 residues long: Ubiquitin carboxyl-terminal hydrolase 17-like protein B (468 aa).

A disordered region spans residues 1-20 (MVVALSFPEADPAMSPPSAP). The region spanning 51 to 348 (CGLQNTGNSC…NAYVLFYVQQ (298 aa)) is the USP domain. The Nucleophile role is filled by Cys-60. Residue His-307 is the Proton acceptor of the active site. Residues 374 to 449 (KKSGEKKHNK…GGQNLRNTEG (76 aa)) form a disordered region. Residues 394–403 (CENREKRSSK) are compositionally biased toward basic and acidic residues. Over residues 422–434 (GQKQENTKLTPQE) the composition is skewed to polar residues.

The protein belongs to the peptidase C19 family. USP17 subfamily. Ubiquitinated. Detected in brain, heart, liver, lung, kidney, ovary and spleen.

The catalysed reaction is Thiol-dependent hydrolysis of ester, thioester, amide, peptide and isopeptide bonds formed by the C-terminal Gly of ubiquitin (a 76-residue protein attached to proteins as an intracellular targeting signal).. Inhibited by ubiquitin aldehyde. Deubiquitinating enzyme that removes conjugated ubiquitin from specific proteins to regulate different cellular processes. The chain is Ubiquitin carboxyl-terminal hydrolase 17-like protein B from Mus musculus (Mouse).